A 227-amino-acid polypeptide reads, in one-letter code: PKHD-type hydroxylase Bxeno_B2194 (227 aa).

In terms of domain architecture, Fe2OG dioxygenase spans 78 to 178; sequence KVFPPLFNRY…RVASFFWIQS (101 aa). 3 residues coordinate Fe cation: histidine 96, aspartate 98, and histidine 159. Arginine 169 contributes to the 2-oxoglutarate binding site.

Fe(2+) is required as a cofactor. It depends on L-ascorbate as a cofactor.

The sequence is that of PKHD-type hydroxylase Bxeno_B2194 from Paraburkholderia xenovorans (strain LB400).